A 352-amino-acid polypeptide reads, in one-letter code: Phosphoribosylformylglycinamidine cyclo-ligase (352 aa).

Belongs to the AIR synthase family.

Its subcellular location is the cytoplasm. The catalysed reaction is 2-formamido-N(1)-(5-O-phospho-beta-D-ribosyl)acetamidine + ATP = 5-amino-1-(5-phospho-beta-D-ribosyl)imidazole + ADP + phosphate + H(+). The protein operates within purine metabolism; IMP biosynthesis via de novo pathway; 5-amino-1-(5-phospho-D-ribosyl)imidazole from N(2)-formyl-N(1)-(5-phospho-D-ribosyl)glycinamide: step 2/2. This is Phosphoribosylformylglycinamidine cyclo-ligase from Teredinibacter turnerae (strain ATCC 39867 / T7901).